The sequence spans 305 residues: MSRSFYVDSLIIKDSSRPAPSLPESHPGPDFFIPLGMPSPLVMSVSGPGCPSRKSGAFCVCPLCVTSHLHSSRPPAGAGGGATGTAGAAVAGGGVAGGTGALPLLKSQFSPAPGDAQFCPRVSHAHHHHHPPQHHHHHHQPQQPGSAAAAAAAAAAAAAAAAALGHPQHHAPVCAATTYNMSDPRRFHCLSMGGSDTSQVPNGKRMRTAFTSTQLLELEREFSSNMYLSRLRRIEIATYLNLSEKQVKIWFQNRRVKHKKEGKGASRNNHTSCKCVGSQAHYARSEDEDSLSPASANEDKEISPL.

Disordered regions lie at residues 115-151 (DAQF…AAAA) and 259-305 (KKEG…ISPL). The segment covering 123 to 140 (SHAHHHHHPPQHHHHHHQ) has biased composition (basic residues). A compositionally biased stretch (low complexity) spans 141–151 (PQQPGSAAAAA). The segment at residues 203–262 (GKRMRTAFTSTQLLELEREFSSNMYLSRLRRIEIATYLNLSEKQVKIWFQNRRVKHKKEG) is a DNA-binding region (homeobox).

The protein belongs to the Antp homeobox family.

It localises to the nucleus. Transcription factor that binds 5'-CNAATTAG-3' DNA sequence and regulates the expression of numerous genes including genes important for brain development. During telencephalic development, causes ventralization of pallial progenitors and, depending on the developmental stage, specifies different neuronal fates. At early stages, necessary and sufficient to correctly specify the ventral lateral ganglionic eminence (LGE) and its major derivatives, the striatal projection neurons. At later stages, may specify LGE progenitors toward dorsal LGE fates, including olfactory bulb interneurons. The chain is GS homeobox 2 (Gsx2) from Mus musculus (Mouse).